Here is a 499-residue protein sequence, read N- to C-terminus: U4/U6 small nuclear ribonucleoprotein Prp31 (499 aa).

The disordered stretch occupies residues 1–37 (MSLADELLADLEEAAEEEEGGSYGEEEEEPAIEDVQE). Positions 7 to 37 (LLADLEEAAEEEEGGSYGEEEEEPAIEDVQE) are enriched in acidic residues. Coiled-coil stretches lie at residues 85–120 (EAAPEYRVIVDANNLTVEIENELNIIHKFIRDKYSK) and 181–215 (EEELERLEEACDMALELNASKHRIYEYVESRMSFI). Residues 215-333 (IAPNLSIIIG…IERKFDKWQE (119 aa)) form the Nop domain. The tract at residues 334–357 (PPPVKQVKPLPAPLDGQRKKRGGR) is disordered. A Nuclear localization signal (NLS) motif is present at residues 351–364 (RKKRGGRRYRKMKE). Ser379, Ser395, and Ser432 each carry phosphoserine. Lys438 is subject to N6-acetyllysine. Phosphoserine is present on Ser439. Thr440 carries the post-translational modification Phosphothreonine. Ser450 carries the post-translational modification Phosphoserine. Thr455 carries the post-translational modification Phosphothreonine. Residues Lys471 and Lys478 each participate in a glycyl lysine isopeptide (Lys-Gly) (interchain with G-Cter in SUMO2) cross-link.

This sequence belongs to the PRP31 family. In terms of assembly, identified in the spliceosome B complex. Component of the U4/U6-U5 tri-snRNP complex composed of the U4, U6 and U5 snRNAs and at least PRPF3, PRPF4, PRPF6, PRPF8, PRPF31, SNRNP200, TXNL4A, SNRNP40, DDX23, CD2BP2, PPIH, SNU13, EFTUD2, SART1 and USP39. Interacts with a complex formed by SNU13 and U4 snRNA, but not with SNU13 or U4 snRNA alone. The complex formed by SNU13 and PRPF31 also binds U4atac snRNA, a characteristic component of specific, less abundant spliceosomal complexes. Interacts with PRPF6/U5 snRNP-associated 102 kDa protein. Component of some MLL1/MLL complex, at least composed of the core components KMT2A/MLL1, ASH2L, HCFC1/HCF1, WDR5 and RBBP5, as well as the facultative components BACC1, CHD8, E2F6, HSP70, INO80C, KANSL1, LAS1L, MAX, MCRS1, MGA, KAT8/MOF, PELP1, PHF20, PRP31, RING2, RUVB1/TIP49A, RUVB2/TIP49B, SENP3, TAF1, TAF4, TAF6, TAF7, TAF9 and TEX10. Interacts (via its NLS) with CTNNBL1. Interacts with USH1G. In terms of processing, phosphorylated by PRP4K during spliceosome assembly. Ubiquitously expressed.

Its subcellular location is the nucleus. It localises to the nucleus speckle. The protein localises to the cajal body. Functionally, involved in pre-mRNA splicing as component of the spliceosome. Required for the assembly of the U4/U5/U6 tri-snRNP complex, one of the building blocks of the spliceosome. The protein is U4/U6 small nuclear ribonucleoprotein Prp31 of Homo sapiens (Human).